The following is a 185-amino-acid chain: UPF0397 protein LBA0922 (185 aa).

5 helical membrane-spanning segments follow: residues 11-31, 45-65, 72-92, 111-131, and 146-166; these read VVAI…TSIP, FLAF…GFIG, IMYG…GWII, IILF…VVAP, and FVQG…IGTI.

Belongs to the UPF0397 family.

The protein resides in the cell membrane. This chain is UPF0397 protein LBA0922, found in Lactobacillus acidophilus (strain ATCC 700396 / NCK56 / N2 / NCFM).